The following is a 277-amino-acid chain: MEMO1 family protein TM_0087 (277 aa).

Belongs to the MEMO1 family.

The sequence is that of MEMO1 family protein TM_0087 from Thermotoga maritima (strain ATCC 43589 / DSM 3109 / JCM 10099 / NBRC 100826 / MSB8).